The chain runs to 109 residues: uncharacterized protein (109 aa).

Residues 90-107 traverse the membrane as a helical segment; that stretch reads IICNFWGSLLGVGIAFYQ.

It localises to the membrane. This is an uncharacterized protein from Saccharomyces cerevisiae (strain ATCC 204508 / S288c) (Baker's yeast).